Reading from the N-terminus, the 130-residue chain is Small ribosomal subunit protein uS8 (130 aa).

Lysine 88 carries the post-translational modification N6-succinyllysine.

The protein belongs to the universal ribosomal protein uS8 family. In terms of assembly, component of the 40S ribosomal subunit. Part of the small subunit (SSU) processome, composed of more than 70 proteins and the RNA chaperone small nucleolar RNA (snoRNA) U3.

It is found in the cytoplasm. The protein resides in the nucleus. It localises to the nucleolus. Functionally, component of the small ribosomal subunit. Part of the small subunit (SSU) processome, first precursor of the small eukaryotic ribosomal subunit. During the assembly of the SSU processome in the nucleolus, many ribosome biogenesis factors, an RNA chaperone and ribosomal proteins associate with the nascent pre-rRNA and work in concert to generate RNA folding, modifications, rearrangements and cleavage as well as targeted degradation of pre-ribosomal RNA by the RNA exosome. Required for proper erythropoiesis. This Pongo abelii (Sumatran orangutan) protein is Small ribosomal subunit protein uS8 (RPS15A).